The primary structure comprises 885 residues: Chromatin assembly factor 1 subunit A-B (885 aa).

4 disordered regions span residues M1–Q24, E115–C157, L176–K361, and V536–K605. Low complexity predominate over residues K12 to K21. Polar residues-rich tracts occupy residues D116–N128, Q134–C157, and S182–S193. 2 stretches are compositionally biased toward low complexity: residues V211 to V227 and S237 to T254. Residues S251 to K376 adopt a coiled-coil conformation. Basic and acidic residues predominate over residues S255–K361. Composition is skewed to acidic residues over residues V536–G548 and E557–G573. The segment at C629–S665 is necessary for homodimerization, competence for chromatin assembly.

The protein belongs to the CHAF1A family. Homodimer.

Its subcellular location is the nucleus. Involved in chromatin assembly in DNA replication and DNA repair. The polypeptide is Chromatin assembly factor 1 subunit A-B (chaf1a-b) (Xenopus laevis (African clawed frog)).